Reading from the N-terminus, the 136-residue chain is uncharacterized protein (136 aa).

This is an uncharacterized protein from Pseudomonas amygdali pv. tabaci (Pseudomonas syringae pv. tabaci).